Reading from the N-terminus, the 154-residue chain is Small ribosomal subunit protein eS10 (154 aa).

Residues 91 to 154 are disordered; the sequence is ATMKKQASRP…ERSAPAPQQN (64 aa). Basic and acidic residues predominate over residues 124–135; the sequence is RGDRRQGGDRRG.

This sequence belongs to the eukaryotic ribosomal protein eS10 family.

The protein resides in the cytoplasm. In Dictyostelium discoideum (Social amoeba), this protein is Small ribosomal subunit protein eS10 (rps10).